We begin with the raw amino-acid sequence, 309 residues long: Manganese-dependent inorganic pyrophosphatase (309 aa).

H9, D13, D15, D75, H97, and D149 together coordinate Mn(2+).

Homodimer. Mn(2+) is required as a cofactor.

It localises to the cytoplasm. It catalyses the reaction diphosphate + H2O = 2 phosphate + H(+). The sequence is that of Manganese-dependent inorganic pyrophosphatase (ppaC) from Bacillus subtilis (strain 168).